The chain runs to 124 residues: Small ribosomal subunit protein uS12 (124 aa).

Residues 1–30 (MPTIQQLVRKGRRDKVAKVKTAALKGSPQR) are disordered. A 3-methylthioaspartic acid modification is found at Asp-89. A disordered region spans residues 105–124 (QGVKNRKQARSRYGAKKEKS). A compositionally biased stretch (basic residues) spans 108-118 (KNRKQARSRYG).

This sequence belongs to the universal ribosomal protein uS12 family. In terms of assembly, part of the 30S ribosomal subunit. Contacts proteins S8 and S17. May interact with IF1 in the 30S initiation complex.

Its function is as follows. With S4 and S5 plays an important role in translational accuracy. Interacts with and stabilizes bases of the 16S rRNA that are involved in tRNA selection in the A site and with the mRNA backbone. Located at the interface of the 30S and 50S subunits, it traverses the body of the 30S subunit contacting proteins on the other side and probably holding the rRNA structure together. The combined cluster of proteins S8, S12 and S17 appears to hold together the shoulder and platform of the 30S subunit. The protein is Small ribosomal subunit protein uS12 of Mycobacterium intracellulare.